We begin with the raw amino-acid sequence, 425 residues long: Bifunctional phosphoribosylaminoimidazole carboxylase/phosphoribosylaminoimidazole succinocarboxamide synthetase (425 aa).

Alanine 2 bears the N-acetylalanine mark. The tract at residues 2–260 is SAICAR synthetase domain; the sequence is ATAEVLNIGK…WVAERVELLL (259 aa). The residue at position 22 (tyrosine 22) is a Phosphotyrosine. At serine 27 the chain carries Phosphoserine. Lysine 36 carries the post-translational modification N6-acetyllysine. At serine 107 the chain carries Phosphoserine. The residue at position 238 (threonine 238) is a Phosphothreonine. An N6-acetyllysine modification is found at lysine 247. A linker region spans residues 261–266; sequence KSESQC. The tract at residues 267 to 425 is AIR carboxylase domain; sequence RVVVLMGSTS…ADKKIRECNL (159 aa). Serine 274 bears the Phosphoserine mark. Serine 332 lines the CO2 pocket.

The protein in the N-terminal section; belongs to the SAICAR synthetase family. It in the C-terminal section; belongs to the AIR carboxylase family. Class II subfamily. Homooctamer.

It carries out the reaction 5-amino-1-(5-phospho-D-ribosyl)imidazole-4-carboxylate + L-aspartate + ATP = (2S)-2-[5-amino-1-(5-phospho-beta-D-ribosyl)imidazole-4-carboxamido]succinate + ADP + phosphate + 2 H(+). The catalysed reaction is 5-amino-1-(5-phospho-D-ribosyl)imidazole-4-carboxylate + H(+) = 5-amino-1-(5-phospho-beta-D-ribosyl)imidazole + CO2. It functions in the pathway purine metabolism; IMP biosynthesis via de novo pathway; 5-amino-1-(5-phospho-D-ribosyl)imidazole-4-carboxamide from 5-amino-1-(5-phospho-D-ribosyl)imidazole-4-carboxylate: step 1/2. Its pathway is purine metabolism; IMP biosynthesis via de novo pathway; 5-amino-1-(5-phospho-D-ribosyl)imidazole-4-carboxylate from 5-amino-1-(5-phospho-D-ribosyl)imidazole (carboxylase route): step 1/1. Functionally, bifunctional phosphoribosylaminoimidazole carboxylase and phosphoribosylaminoimidazole succinocarboxamide synthetase catalyzing two reactions of the de novo purine biosynthetic pathway. The sequence is that of Bifunctional phosphoribosylaminoimidazole carboxylase/phosphoribosylaminoimidazole succinocarboxamide synthetase from Homo sapiens (Human).